Reading from the N-terminus, the 159-residue chain is 2-C-methyl-D-erythritol 2,4-cyclodiphosphate synthase (159 aa).

The a divalent metal cation site is built by Asp8 and His10. Residues Asp8–His10 and His34–Ser35 contribute to the 4-CDP-2-C-methyl-D-erythritol 2-phosphate site. His42 provides a ligand contact to a divalent metal cation. 4-CDP-2-C-methyl-D-erythritol 2-phosphate contacts are provided by residues Asp56–Gly58, Ala100–Ala106, Thr132–Glu135, Phe139, and Arg142.

The protein belongs to the IspF family. Homotrimer. It depends on a divalent metal cation as a cofactor.

It carries out the reaction 4-CDP-2-C-methyl-D-erythritol 2-phosphate = 2-C-methyl-D-erythritol 2,4-cyclic diphosphate + CMP. It functions in the pathway isoprenoid biosynthesis; isopentenyl diphosphate biosynthesis via DXP pathway; isopentenyl diphosphate from 1-deoxy-D-xylulose 5-phosphate: step 4/6. Functionally, involved in the biosynthesis of isopentenyl diphosphate (IPP) and dimethylallyl diphosphate (DMAPP), two major building blocks of isoprenoid compounds. Catalyzes the conversion of 4-diphosphocytidyl-2-C-methyl-D-erythritol 2-phosphate (CDP-ME2P) to 2-C-methyl-D-erythritol 2,4-cyclodiphosphate (ME-CPP) with a corresponding release of cytidine 5-monophosphate (CMP). This is 2-C-methyl-D-erythritol 2,4-cyclodiphosphate synthase from Marinobacter nauticus (strain ATCC 700491 / DSM 11845 / VT8) (Marinobacter aquaeolei).